Here is a 39-residue protein sequence, read N- to C-terminus: Photosystem II reaction center protein L (39 aa).

The chain crosses the membrane as a helical span at residues 18 to 38 (SLYLGLLLIAVLGILFSSYFF).

Belongs to the PsbL family. PSII is composed of 1 copy each of membrane proteins PsbA, PsbB, PsbC, PsbD, PsbE, PsbF, PsbH, PsbI, PsbJ, PsbK, PsbL, PsbM, PsbT, PsbX, PsbY, PsbZ, Psb30/Ycf12, peripheral proteins PsbO, CyanoQ (PsbQ), PsbU, PsbV and a large number of cofactors. It forms dimeric complexes.

The protein localises to the cellular thylakoid membrane. One of the components of the core complex of photosystem II (PSII). PSII is a light-driven water:plastoquinone oxidoreductase that uses light energy to abstract electrons from H(2)O, generating O(2) and a proton gradient subsequently used for ATP formation. It consists of a core antenna complex that captures photons, and an electron transfer chain that converts photonic excitation into a charge separation. This subunit is found at the monomer-monomer interface and is required for correct PSII assembly and/or dimerization. This chain is Photosystem II reaction center protein L, found in Crocosphaera subtropica (strain ATCC 51142 / BH68) (Cyanothece sp. (strain ATCC 51142)).